Consider the following 89-residue polypeptide: Small ribosomal subunit protein uS15 (89 aa).

Belongs to the universal ribosomal protein uS15 family. As to quaternary structure, part of the 30S ribosomal subunit. Forms a bridge to the 50S subunit in the 70S ribosome, contacting the 23S rRNA.

Functionally, one of the primary rRNA binding proteins, it binds directly to 16S rRNA where it helps nucleate assembly of the platform of the 30S subunit by binding and bridging several RNA helices of the 16S rRNA. In terms of biological role, forms an intersubunit bridge (bridge B4) with the 23S rRNA of the 50S subunit in the ribosome. The chain is Small ribosomal subunit protein uS15 from Zymomonas mobilis subsp. mobilis (strain ATCC 31821 / ZM4 / CP4).